The chain runs to 856 residues: Structure-specific endonuclease subunit SLX4 (856 aa).

A compositionally biased stretch (polar residues) spans 1 to 19 (MDNAAIASQSNTPPSNGRS). Disordered regions lie at residues 1–24 (MDNA…ARFV), 39–61 (IEPS…SKSP), 88–121 (VDSP…HKMA), 139–201 (KTRK…TDNE), 296–326 (GIQT…KKPQ), 362–392 (KKMG…GNGP), 621–640 (SKSS…SQGD), 653–688 (RSDS…SNEG), and 715–742 (DSVG…QDCD). Low complexity predominate over residues 51–60 (STLLTSLSKS). Residues 139–152 (KTRKKKAATAKRTR) show a composition bias toward basic residues. The span at 296–309 (GIQTPTESRPATND) shows a compositional bias: polar residues. A compositionally biased stretch (polar residues) spans 673–686 (SVKSQESKSFSLSN).

This sequence belongs to the SLX4 family. Forms a heterodimer with SLX1. Post-translationally, phosphorylated in response to DNA damage.

It localises to the nucleus. In terms of biological role, regulatory subunit of the SLX1-SLX4 structure-specific endonuclease that resolves DNA secondary structures generated during DNA repair and recombination. Has endonuclease activity towards branched DNA substrates, introducing single-strand cuts in duplex DNA close to junctions with ss-DNA. The polypeptide is Structure-specific endonuclease subunit SLX4 (Ajellomyces dermatitidis (strain ER-3 / ATCC MYA-2586) (Blastomyces dermatitidis)).